A 348-amino-acid polypeptide reads, in one-letter code: Phosphoribosylformylglycinamidine cyclo-ligase (348 aa).

Belongs to the AIR synthase family.

It is found in the cytoplasm. The enzyme catalyses 2-formamido-N(1)-(5-O-phospho-beta-D-ribosyl)acetamidine + ATP = 5-amino-1-(5-phospho-beta-D-ribosyl)imidazole + ADP + phosphate + H(+). Its pathway is purine metabolism; IMP biosynthesis via de novo pathway; 5-amino-1-(5-phospho-D-ribosyl)imidazole from N(2)-formyl-N(1)-(5-phospho-D-ribosyl)glycinamide: step 2/2. The polypeptide is Phosphoribosylformylglycinamidine cyclo-ligase (Cereibacter sphaeroides (strain KD131 / KCTC 12085) (Rhodobacter sphaeroides)).